Here is a 343-residue protein sequence, read N- to C-terminus: Heat-inducible transcription repressor HrcA (343 aa).

The protein belongs to the HrcA family.

Functionally, negative regulator of class I heat shock genes (grpE-dnaK-dnaJ and groELS operons). Prevents heat-shock induction of these operons. The sequence is that of Heat-inducible transcription repressor HrcA from Phytoplasma mali (strain AT).